We begin with the raw amino-acid sequence, 463 residues long: ATP synthase subunit beta (463 aa).

Residue 152-159 (GGAGVGKT) participates in ATP binding.

This sequence belongs to the ATPase alpha/beta chains family. F-type ATPases have 2 components, CF(1) - the catalytic core - and CF(0) - the membrane proton channel. CF(1) has five subunits: alpha(3), beta(3), gamma(1), delta(1), epsilon(1). CF(0) has three main subunits: a(1), b(2) and c(9-12). The alpha and beta chains form an alternating ring which encloses part of the gamma chain. CF(1) is attached to CF(0) by a central stalk formed by the gamma and epsilon chains, while a peripheral stalk is formed by the delta and b chains.

Its subcellular location is the cell inner membrane. The catalysed reaction is ATP + H2O + 4 H(+)(in) = ADP + phosphate + 5 H(+)(out). Produces ATP from ADP in the presence of a proton gradient across the membrane. The catalytic sites are hosted primarily by the beta subunits. The chain is ATP synthase subunit beta from Shewanella putrefaciens (strain CN-32 / ATCC BAA-453).